We begin with the raw amino-acid sequence, 367 residues long: Phosphoribosylaminoimidazole-succinocarboxamide synthase (367 aa).

The protein belongs to the SAICAR synthetase family.

It carries out the reaction 5-amino-1-(5-phospho-D-ribosyl)imidazole-4-carboxylate + L-aspartate + ATP = (2S)-2-[5-amino-1-(5-phospho-beta-D-ribosyl)imidazole-4-carboxamido]succinate + ADP + phosphate + 2 H(+). It participates in purine metabolism; IMP biosynthesis via de novo pathway; 5-amino-1-(5-phospho-D-ribosyl)imidazole-4-carboxamide from 5-amino-1-(5-phospho-D-ribosyl)imidazole-4-carboxylate: step 1/2. This is Phosphoribosylaminoimidazole-succinocarboxamide synthase from Shewanella sp. (strain W3-18-1).